Consider the following 150-residue polypeptide: Ribosome maturation factor RimP (150 aa).

The protein belongs to the RimP family.

It is found in the cytoplasm. In terms of biological role, required for maturation of 30S ribosomal subunits. This chain is Ribosome maturation factor RimP, found in Acaryochloris marina (strain MBIC 11017).